Reading from the N-terminus, the 390-residue chain is MASKGSNTDCMSCSVLNWEQVSRLHEVLTEVVPIHGRGNFPTLKITLKDIVQTVRSRLNEAGIAVHDVRLNGSAAGHVLVKDNGLGCKDLDLIFQVSLPSEAEFQLVRDVVLRSLLNFLPEGVSKLKISPVTLKEAYIQKLVKVSTESDRWSLISLSNKHGRNVELKFVDCIRRQFEFSVDSFQIILDSLLFYYDYSENPMSEHFHPTVIGESMYGDFEAAFDHLQNKLIATKNPEEIRGGGLLKYSNLLVRDFRPMDKDEIKTLERYMCSRFFIDFPDILDQQRKLETYLQNHFSKEERSKYDYLMILRRVVNESTVCLMGHERRQTLNLISLLALKVLAEQNIIPNATTVTCYYQPAPYVSDVNFSNYYLANPPVPYSQSYPTWLPCN.

Belongs to the TENT family.

It is found in the nucleus. It localises to the cytoplasm. The protein localises to the cytoskeleton. The protein resides in the microtubule organizing center. Its subcellular location is the centrosome. The catalysed reaction is RNA(n) + ATP = RNA(n)-3'-adenine ribonucleotide + diphosphate. Its function is as follows. Catalyzes the transfer of one adenosine molecule from an ATP to an mRNA poly(A) tail bearing a 3'-OH terminal group and enhances mRNA stability and gene expression. The protein is Terminal nucleotidyltransferase 5C of Gallus gallus (Chicken).